The sequence spans 629 residues: Dual specificity tyrosine-phosphorylation-regulated kinase 1B (629 aa).

Position 63 is a phosphotyrosine (Y63). Residues 67 to 86 form a disordered region; the sequence is KKRRAQQAPPQDSSTKKEKK. Residues 69–86 carry the Bipartite nuclear localization signal motif; it reads RRAQQAPPQDSSTKKEKK. Residues Y92 and Y111 each carry the phosphotyrosine modification. Positions 111 to 431 constitute a Protein kinase domain; that stretch reads YEIDSLIGKG…PLGALQHGFF (321 aa). 117-125 is a binding site for ATP; sequence IGKGSFGQV. Y129 carries the post-translational modification Phosphotyrosine. Residue K140 participates in ATP binding. Position 171 is a phosphotyrosine (Y171). 190–193 lines the ATP pocket; it reads FELL. The Proton acceptor role is filled by D239. Position 262 is a phosphoserine (S262). Residue Y271 is modified to Phosphotyrosine; by autocatalysis. A Phosphotyrosine modification is found at Y273. The disordered stretch occupies residues 380-399; it reads GVQTGGPGGRRAGEPGHSPA. At Y401 the chain carries Phosphotyrosine. Disordered stretches follow at residues 436-480 and 496-629; these read DEAT…SNDN and PITD…AASS. Low complexity predominate over residues 438–477; the sequence is ATNTGPAGSSASTSPAPLDTCPSSSTASSISSSGGSSGSS. The tract at residues 480 to 520 is interaction with RANBP9; it reads NRAYRYSNRYCGGPGPPITDCEMNSPQVLPSQPLRPWAGGD. 2 stretches are compositionally biased toward pro residues: residues 552–562 and 574–585; these read PPSPTSPPPPE and DCSPPPPAPAPQ. S624 carries the post-translational modification Phosphoserine.

It belongs to the protein kinase superfamily. CMGC Ser/Thr protein kinase family. MNB/DYRK subfamily. Dimer. Interacts with DCOHM, MAP2K3/MKK3, RANBP9 and TCF1/HNF1A. Part of a complex consisting of RANBP9, RAN, DYRK1B and COPS5. Interacts with DCAF7. Interacts with RNF169. Phosphorylated by MAP kinase. Tyrosine phosphorylation may be required for dimerization. Isoform 1 and isoform 2 are broadly expressed. Isoform 3 seems specific for skeletal muscle (at protein level).

Its subcellular location is the nucleus. The protein resides in the nucleolus. It is found in the chromosome. The enzyme catalyses L-seryl-[protein] + ATP = O-phospho-L-seryl-[protein] + ADP + H(+). The catalysed reaction is L-threonyl-[protein] + ATP = O-phospho-L-threonyl-[protein] + ADP + H(+). It catalyses the reaction L-tyrosyl-[protein] + ATP = O-phospho-L-tyrosyl-[protein] + ADP + H(+). With respect to regulation, inhibited by RANBP9. In terms of biological role, dual-specificity kinase which possesses both serine/threonine and tyrosine kinase activities. Plays an essential role in ribosomal DNA (rDNA) double-strand break repair and rDNA copy number maintenance. During DNA damage, mediates transcription silencing in part via phosphorylating and enforcing DSB accumulation of the histone methyltransferase EHMT2. Enhances the transcriptional activity of TCF1/HNF1A and FOXO1. Inhibits epithelial cell migration. Mediates colon carcinoma cell survival in mitogen-poor environments. Inhibits the SHH and WNT1 pathways, thereby enhancing adipogenesis. In addition, promotes expression of the gluconeogenic enzyme glucose-6-phosphatase catalytic subunit 1 (G6PC1). This is Dual specificity tyrosine-phosphorylation-regulated kinase 1B (Dyrk1b) from Mus musculus (Mouse).